The sequence spans 311 residues: Olfactory receptor 10D1B (311 aa).

Residues 1–24 (MKNLSVVTQFILLGIPHTEGVETM) lie on the Extracellular side of the membrane. Residues 25 to 45 (LFVLFFSFYIFTLVGNLLILL) traverse the membrane as a helical segment. Topologically, residues 46 to 54 (AIVSSSRLH) are cytoplasmic. A helical membrane pass occupies residues 55 to 75 (TPMYFFLCQLSVCDIFFPSVS). Over 76-95 (SPKMLFYLSGNTPAISYAGC) the chain is Extracellular. Cys95 and Cys187 are disulfide-bonded. A helical membrane pass occupies residues 96-116 (VSQLFFYHFLGGTECFLYTVM). Residues 117–137 (AYDRFVAICYPLRYSVIMSHR) lie on the Cytoplasmic side of the membrane. Residues 138-158 (ICAFLAMGTAVFGCIHSTFLT) traverse the membrane as a helical segment. Residues 159–192 (TLTFQLPYCGPKDVNYYFCDIPVVMKLACADTST) lie on the Extracellular side of the membrane. The helical transmembrane segment at 193 to 213 (LEMVGFISVGLMPLSCFFFIL) threads the bilayer. The Cytoplasmic segment spans residues 214 to 237 (TSYSCIVRSILQIRSTEGRHRAFS). A helical membrane pass occupies residues 238–258 (TCSAHFTAILLFYMPVIFIYL). At 259 to 271 (RPTPSPWLDATVQ) the chain is on the extracellular side. A helical membrane pass occupies residues 272–288 (ILNNLVTPMLNPLIYSL). Topologically, residues 289–311 (RNKEVKSSLWTVLHLLCFLPKHL) are cytoplasmic.

Belongs to the G-protein coupled receptor 1 family.

It localises to the cell membrane. Functionally, odorant receptor. The sequence is that of Olfactory receptor 10D1B from Mus musculus (Mouse).